Consider the following 229-residue polypeptide: Putative N-acetylmannosamine-6-phosphate 2-epimerase (229 aa).

Belongs to the NanE family.

It catalyses the reaction an N-acyl-D-glucosamine 6-phosphate = an N-acyl-D-mannosamine 6-phosphate. Its pathway is amino-sugar metabolism; N-acetylneuraminate degradation; D-fructose 6-phosphate from N-acetylneuraminate: step 3/5. Converts N-acetylmannosamine-6-phosphate (ManNAc-6-P) to N-acetylglucosamine-6-phosphate (GlcNAc-6-P). The chain is Putative N-acetylmannosamine-6-phosphate 2-epimerase from Escherichia coli O7:K1 (strain IAI39 / ExPEC).